Consider the following 354-residue polypeptide: NADH-quinone oxidoreductase subunit H (354 aa).

Transmembrane regions (helical) follow at residues 23 to 43 (LVRA…LILW), 91 to 111 (YIIA…VVPF), 124 to 144 (LLYV…AGWA), 162 to 182 (ISYE…TGSL), 203 to 223 (ILSW…ISGV), 250 to 270 (GMAF…ISAM), 291 to 311 (IPGF…FIWL), and 330 to 350 (IFIP…VSPW).

The protein belongs to the complex I subunit 1 family. NDH-1 is composed of 14 different subunits. Subunits NuoA, H, J, K, L, M, N constitute the membrane sector of the complex.

It is found in the cell inner membrane. The catalysed reaction is a quinone + NADH + 5 H(+)(in) = a quinol + NAD(+) + 4 H(+)(out). Its function is as follows. NDH-1 shuttles electrons from NADH, via FMN and iron-sulfur (Fe-S) centers, to quinones in the respiratory chain. The immediate electron acceptor for the enzyme in this species is believed to be ubiquinone. Couples the redox reaction to proton translocation (for every two electrons transferred, four hydrogen ions are translocated across the cytoplasmic membrane), and thus conserves the redox energy in a proton gradient. This subunit may bind ubiquinone. In Ralstonia nicotianae (strain ATCC BAA-1114 / GMI1000) (Ralstonia solanacearum), this protein is NADH-quinone oxidoreductase subunit H.